Reading from the N-terminus, the 164-residue chain is Lipoprotein signal peptidase (164 aa).

A run of 3 helical transmembrane segments spans residues 12–32, 70–90, and 102–122; these read WLWL…LILQ, WFFA…MYRS, and ALII…GFVV. Active-site residues include aspartate 123 and aspartate 141. The helical transmembrane segment at 137–157 threads the bilayer; sequence FNLADTAICVGAALIVLEGFL.

It belongs to the peptidase A8 family.

Its subcellular location is the cell inner membrane. It carries out the reaction Release of signal peptides from bacterial membrane prolipoproteins. Hydrolyzes -Xaa-Yaa-Zaa-|-(S,diacylglyceryl)Cys-, in which Xaa is hydrophobic (preferably Leu), and Yaa (Ala or Ser) and Zaa (Gly or Ala) have small, neutral side chains.. It functions in the pathway protein modification; lipoprotein biosynthesis (signal peptide cleavage). In terms of biological role, this protein specifically catalyzes the removal of signal peptides from prolipoproteins. In Escherichia coli O6:K15:H31 (strain 536 / UPEC), this protein is Lipoprotein signal peptidase.